The chain runs to 665 residues: Probable potassium transport system protein Kup (665 aa).

The segment covering Met1–Ser18 has biased composition (low complexity). The disordered stretch occupies residues Met1–His31. Transmembrane regions (helical) follow at residues Phe40–Leu60, Val83–Ile103, Leu131–Pro151, Gly171–Ile191, Leu202–Leu222, Gly245–Leu265, Trp281–Leu301, Leu332–Phe352, Ile380–Phe400, Ala409–Met429, Trp435–Leu455, and Phe462–Thr482.

Belongs to the HAK/KUP transporter (TC 2.A.72) family.

The protein localises to the cell inner membrane. The enzyme catalyses K(+)(in) + H(+)(in) = K(+)(out) + H(+)(out). Transport of potassium into the cell. Likely operates as a K(+):H(+) symporter. The chain is Probable potassium transport system protein Kup from Caulobacter vibrioides (strain ATCC 19089 / CIP 103742 / CB 15) (Caulobacter crescentus).